Consider the following 201-residue polypeptide: MGNLFGRKKQSRVTEQDKAILQLKQQRDKLRQYQKRIAQQLERERALARQLLRDGRKERAKLLLKKKRYQEQLLDRTENQISSLEAMVQSIEFTQIEMKVMEGLQFGNECLNKMHQVMSIEEVERILDETQEAVEYQRQIDELLAGSFTQEDEDAILEELSAITQEQIELPEVPSEPLPEKIPEDVPVKARPRQAELVAAS.

G2 carries the N-myristoyl glycine lipid modification. The stretch at 10–145 forms a coiled coil; that stretch reads QSRVTEQDKA…YQRQIDELLA (136 aa). Position 119 is a phosphoserine (S119). T130 is subject to Phosphothreonine. Residues 168–179 carry the Type-2 MIT-interacting motif motif; the sequence is IELPEVPSEPLP. Residues 171-201 are disordered; sequence PEVPSEPLPEKIPEDVPVKARPRQAELVAAS. The segment covering 178-188 has biased composition (basic and acidic residues); the sequence is LPEKIPEDVPV.

This sequence belongs to the SNF7 family. As to quaternary structure, probable core component of the endosomal sorting required for transport complex III (ESCRT-III). ESCRT-III components are thought to multimerize to form a flat lattice on the perimeter membrane of the endosome. Several assembly forms of ESCRT-III may exist that interact and act sequentially. Interacts with VPS4A; the interaction is direct. Interacts with VPS4B; the interaction is direct. Interacts with CHMP4A, CHMP4B and CHMP4C. Interacts with SNF8, VPS25 and VPS36. Post-translationally, ISGylated in a CHMP5-dependent manner. Isgylation weakens its interaction with VPS4A.

Its subcellular location is the endomembrane system. The protein resides in the endosome membrane. It is found in the late endosome membrane. It localises to the membrane. In terms of biological role, probable core component of the endosomal sorting required for transport complex III (ESCRT-III) which is involved in multivesicular bodies (MVBs) formation and sorting of endosomal cargo proteins into MVBs. MVBs contain intraluminal vesicles (ILVs) that are generated by invagination and scission from the limiting membrane of the endosome and mostly are delivered to lysosomes enabling degradation of membrane proteins, such as stimulated growth factor receptors, lysosomal enzymes and lipids. The MVB pathway appears to require the sequential function of ESCRT-O, -I,-II and -III complexes. ESCRT-III proteins mostly dissociate from the invaginating membrane before the ILV is released. The ESCRT machinery also functions in topologically equivalent membrane fission events, such as the terminal stages of cytokinesis and the budding of enveloped viruses (lentiviruses). ESCRT-III proteins are believed to mediate the necessary vesicle extrusion and/or membrane fission activities, possibly in conjunction with the AAA ATPase VPS4. In the ESCRT-III complex, it probably serves as an acceptor for the ESCRT-II complex on endosomal membrane. In Pongo abelii (Sumatran orangutan), this protein is Charged multivesicular body protein 6 (CHMP6).